The chain runs to 293 residues: 33 kDa chaperonin (293 aa).

Intrachain disulfides connect Cys237–Cys239 and Cys271–Cys274.

This sequence belongs to the HSP33 family. Post-translationally, under oxidizing conditions two disulfide bonds are formed involving the reactive cysteines. Under reducing conditions zinc is bound to the reactive cysteines and the protein is inactive.

It is found in the cytoplasm. Redox regulated molecular chaperone. Protects both thermally unfolding and oxidatively damaged proteins from irreversible aggregation. Plays an important role in the bacterial defense system toward oxidative stress. This Haemophilus influenzae (strain ATCC 51907 / DSM 11121 / KW20 / Rd) protein is 33 kDa chaperonin.